We begin with the raw amino-acid sequence, 150 residues long: Small ribosomal subunit protein uS19y (150 aa).

The protein belongs to the universal ribosomal protein uS19 family.

It localises to the cytoplasm. In Arabidopsis thaliana (Mouse-ear cress), this protein is Small ribosomal subunit protein uS19y (RPS15C).